The following is a 354-amino-acid chain: Rhodopsin (354 aa).

The Extracellular segment spans residues 1–36; sequence MNGTEGPNFYIPMSNKTGVVRSPFEYPQYYLAEPWK. 2 N-linked (GlcNAc...) asparagine glycosylation sites follow: Asn2 and Asn15. A helical transmembrane segment spans residues 37-61; the sequence is YSILAAYMFLLILLGFPINFMTLYV. Topologically, residues 62-73 are cytoplasmic; sequence TIQHKKLRTPLN. Residues 74–96 form a helical membrane-spanning segment; the sequence is YILLNLAFANHFMVLCGFTITLY. The Extracellular portion of the chain corresponds to 97–110; sequence TSLHGYFVFGQSGC. A disulfide bridge links Cys110 with Cys187. A helical membrane pass occupies residues 111–133; that stretch reads YFEGFFATLGGEIALWSLVALAI. The 'Ionic lock' involved in activated form stabilization motif lies at 134-136; the sequence is ERY. Over 134–152 the chain is Cytoplasmic; the sequence is ERYIVVCKPMSNFRFGENH. A helical membrane pass occupies residues 153–173; sequence AMMGVAFTWIMALACAVPPLF. Residues 174-202 are Extracellular-facing; the sequence is GWSRYIPEGMQCSCGVDYYTLKPEINNES. Residues 203 to 224 traverse the membrane as a helical segment; that stretch reads FVIYMFVVHFLIPLIIITFCYG. At 225–252 the chain is on the cytoplasmic side; sequence RLVCTVKEAAAQQQESATTQKAEKEVTR. The helical transmembrane segment at 253-274 threads the bilayer; it reads MVIIMVIFFLICWVPYAYVAFY. The Extracellular segment spans residues 275–286; sequence IFCNQGSEFGPI. A helical transmembrane segment spans residues 287-308; that stretch reads FMTVPAFFAKSSAIYNPVIYIM. Lys296 bears the N6-(retinylidene)lysine mark. The Cytoplasmic portion of the chain corresponds to 309-354; the sequence is LNKQFRNCMITTLCCGKNPFGDDDASSAATSKTEATSVSTSQVSPA. S-palmitoyl cysteine attachment occurs at residues Cys322 and Cys323. The disordered stretch occupies residues 332–354; sequence DASSAATSKTEATSVSTSQVSPA. Over residues 334–354 the composition is skewed to low complexity; that stretch reads SSAATSKTEATSVSTSQVSPA.

Belongs to the G-protein coupled receptor 1 family. Opsin subfamily. In terms of processing, contains one covalently linked retinal chromophore. Upon light absorption, the covalently bound 11-cis-retinal is converted to all-trans-retinal. After hydrolysis of the Schiff base and release of the covalently bound all-trans-retinal, active rhodopsin is regenerated by binding of a fresh molecule of 11-cis-retinal.

The protein resides in the membrane. Its subcellular location is the cell projection. It localises to the cilium. It is found in the photoreceptor outer segment. Photoreceptor required for image-forming vision at low light intensity. Required for photoreceptor cell viability after birth. Light-induced isomerization of 11-cis to all-trans retinal triggers a conformational change that activates signaling via G-proteins. Subsequent receptor phosphorylation mediates displacement of the bound G-protein alpha subunit by arrestin and terminates signaling. The chain is Rhodopsin (RHO) from Rana temporaria (European common frog).